The primary structure comprises 96 residues: MGSGYAKKKKEAKLMERQFMEMEASLEQKRFSGEAGNGLVSVTINGKCDLVDVRIKPDCLDPEDPEVVADLFRAAFKAAKAALDSEMSAMQMGMPF.

It belongs to the YbaB/EbfC family. Homodimer.

The protein resides in the cytoplasm. Its subcellular location is the nucleoid. Functionally, binds to DNA and alters its conformation. May be involved in regulation of gene expression, nucleoid organization and DNA protection. In Chlamydia trachomatis serovar D (strain ATCC VR-885 / DSM 19411 / UW-3/Cx), this protein is Nucleoid-associated protein CT_335.